A 449-amino-acid polypeptide reads, in one-letter code: Na(+)/H(+) antiporter NhaA 1 (449 aa).

The next 11 helical transmembrane spans lie at 38–58 (GILL…PWAA), 79–99 (FTIR…VVGM), 117–137 (VLPL…YAAF), 145–165 (AGWA…LTLV), 175–195 (VFLT…IALF), 198–218 (SGLH…LACL), 240–260 (MHHG…FMPA), 311–331 (FVHL…ALAN), 347–367 (PLPL…IFLF), 390–410 (GVAV…GLAF), and 422–442 (LGIL…LRFV).

The protein belongs to the NhaA Na(+)/H(+) (TC 2.A.33) antiporter family.

The protein localises to the cell inner membrane. The catalysed reaction is Na(+)(in) + 2 H(+)(out) = Na(+)(out) + 2 H(+)(in). Na(+)/H(+) antiporter that extrudes sodium in exchange for external protons. The chain is Na(+)/H(+) antiporter NhaA 1 from Myxococcus xanthus (strain DK1622).